Here is a 227-residue protein sequence, read N- to C-terminus: MICOS complex subunit MIC19 (227 aa).

A lipid anchor (N-myristoyl glycine) is attached at Gly-2. At Ser-29 the chain carries Phosphoserine. 2 disordered regions span residues 34–61 (DRMK…SDEE) and 73–92 (EQAK…KELD). Residues 39-49 (SSPSGSKSQRY) show a composition bias toward polar residues. Residue Tyr-49 is modified to Phosphotyrosine. Ser-50, Ser-56, and Ser-58 each carry phosphoserine. Lys-142 is modified (N6-acetyllysine). A CHCH domain is found at 180–222 (HPVCADLQAKILQCYRENTHQTLKCSALATQYMHCVNHAKQSM). 2 short sequence motifs (cx9C motif) span residues 183–193 (CADLQAKILQC) and 204–214 (CSALATQYMHC). 2 cysteine pairs are disulfide-bonded: Cys-183-Cys-214 and Cys-193-Cys-204.

The protein belongs to the MICOS complex subunit Mic19 family. Metazoan Mic19 subfamily. As to quaternary structure, component of the mitochondrial contact site and cristae organizing system (MICOS) complex, composed of at least MICOS10/MIC10, CHCHD3/MIC19, CHCHD6/MIC25, APOOL/MIC27, IMMT/MIC60, APOO/MIC23/MIC26 and MICOS13/MIC13. This complex was also known under the names MINOS or MitOS complex. The MICOS complex associates with mitochondrial outer membrane proteins SAMM50, MTX1 and MTX2 (together described as components of the mitochondrial outer membrane sorting assembly machinery (SAM) complex) and DNAJC11, mitochondrial inner membrane protein TMEM11 and with HSPA9. The MICOS and SAM complexes together with DNAJC11 are part of a large protein complex spanning both membranes termed the mitochondrial intermembrane space bridging (MIB) complex. Interacts with HSPA1A/HSPA1B and OPA1, preferentially with the soluble OPA1 form. Interacts with IMMT/MIC60. (Microbial infection) Interacts with human cytomegalovirus protein UL13; this interaction alters cristae architecture. Detected at low levels in brain, placenta, lung, liver, kidney and pancreas with increased levels in heart and skeletal muscle. Higher expression in primary lung cancers than in normal lung tissue.

It is found in the mitochondrion inner membrane. The protein localises to the cytoplasm. Its subcellular location is the nucleus. The protein resides in the mitochondrion. In terms of biological role, component of the MICOS complex, a large protein complex of the mitochondrial inner membrane that plays crucial roles in the maintenance of crista junctions, inner membrane architecture, and formation of contact sites to the outer membrane. Plays an important role in the maintenance of the MICOS complex stability and the mitochondrial cristae morphology. Has also been shown to function as a transcription factor which binds to the BAG1 promoter and represses BAG1 transcription. The chain is MICOS complex subunit MIC19 (CHCHD3) from Homo sapiens (Human).